The following is a 526-amino-acid chain: MERLPLSPAVLFLTITLPILYFWILHTSPARHHGKQLPLPPGPPRLPKIGNLHQVPRQIPWKKYKEWSDTYGPIMSVQLANTIAVVFSSWDLIKTHVERRNTIYSSRPSVPFFLHATGGLNASILPYGPEWKLQRAIRSSVLKPSMTIKYRDVQSMETTQLLHELLSTNDFSVCLRRCIASVFLTVAYGERCADHAGLEAIDRLEELNRAIALHAEALFSGAAGILAQLVLPQALVDRLPVRWKKDADILHNRLTADLVARTRAALARPGWNWVKAFAIKEGTGSGEGDGEQGREVGLKRLAYMVGSLYEASMAASQALRVIILAGILYPDATRRMHDELDAVVGKDRLPDFNDAAQLPYTQAFIKEAMRWRSLTPMGSPRATSDEDECRGYHIPRGATVLVNVWAINHDEGVFLDPFTFKPERWIENPDLPQLLYGMGQRACPGRHMGQDSLFLGTARLFWAFDMALPDGAEAIDQERFLDSGTTLAAFLPDFEVRFTPRSEKHREVIENSVVVSSDVSSVTVAT.

A helical transmembrane segment spans residues 4 to 24 (LPLSPAVLFLTITLPILYFWI). Residue cysteine 443 coordinates heme.

Belongs to the cytochrome P450 family. Heme serves as cofactor.

The protein resides in the membrane. The catalysed reaction is tryprostatin A + reduced [NADPH--hemoprotein reductase] + O2 = fumitremorgin C + oxidized [NADPH--hemoprotein reductase] + 2 H2O + H(+). It participates in mycotoxin biosynthesis. Its function is as follows. Cytochrome P450 monooxygenase; part of the gene cluster that mediates the biosynthesis of fumitremorgins, indole alkaloids that carry not only intriguing chemical structures, but also interesting biological and pharmacological activities. The biosynthesis of fumitremorgin-type alkaloids begins by condensation of the two amino acids L-tryptophan and L-proline to brevianamide F, catalyzed by the non-ribosomal peptide synthetase ftmPS/ftmA. Brevianamide F is then prenylated by the prenyltransferase ftmPT1/ftmB in the presence of dimethylallyl diphosphate, resulting in the formation of tryprostatin B. The three cytochrome P450 monooxygenases, ftmP450-1/ftmC, ftmP450-2/ftmE and ftmP450-3/FtmG, are responsible for the conversion of tryprostatin B to 6-hydroxytryprostatin B, tryprostatin A to fumitremorgin C and fumitremorgin C to 12,13-dihydroxyfumitremorgin C, respectively. The putative methyltransferase ftmMT/ftmD is expected for the conversion of 6-hydroxytryprostatin B to tryprostatin A. FtmPT2/FtmH catalyzes the prenylation of 12,13-dihydroxyfumitre-morgin C in the presence of dimethylallyl diphosphate, resulting in the formation of fumitremorgin B. Fumitremorgin B is further converted to verruculogen by ftmOx1/ftmF via the insertion of an endoperoxide bond between the two prenyl moieties. Finally, verruculogen is further converted to fumitremorgin A by the verruculogen prenyltransferase ftmPT3. This Neosartorya fischeri (strain ATCC 1020 / DSM 3700 / CBS 544.65 / FGSC A1164 / JCM 1740 / NRRL 181 / WB 181) (Aspergillus fischerianus) protein is Fumitremorgin C synthase.